The chain runs to 345 residues: Protein RecA (345 aa).

Residue glycine 65–threonine 72 participates in ATP binding.

Belongs to the RecA family.

The protein resides in the cytoplasm. Can catalyze the hydrolysis of ATP in the presence of single-stranded DNA, the ATP-dependent uptake of single-stranded DNA by duplex DNA, and the ATP-dependent hybridization of homologous single-stranded DNAs. It interacts with LexA causing its activation and leading to its autocatalytic cleavage. This is Protein RecA from Stenotrophomonas maltophilia (strain R551-3).